We begin with the raw amino-acid sequence, 277 residues long: MQTEKQSRDVFYVSDGTAITCETLGHVVLGQFPFVANEKTFPFVESEEKLTELIKHIEISFQTNGIKPLVFFSLVLPDLKARLMESPAYCYDVLESIVQRVKDDIQMEPTPKLQRSRSVGKDTDTYFDRIAAIEYTLAHDDGISLKGLELADIILLGVSRSGKTPTSLYMAMQFGLRVVNYPYIDDDIKGLKLLPEFEIHRHKLFGLTIDPERLTEIRENRLAGSDYASTEQCQHELANVEALFRREAIPYINTTSLSVEEISTRVLEKTGLKRRLF.

Residue 157–164 coordinates ADP; the sequence is GVSRSGKT.

It belongs to the pyruvate, phosphate/water dikinase regulatory protein family. PSRP subfamily.

The enzyme catalyses [pyruvate, water dikinase] + ADP = [pyruvate, water dikinase]-phosphate + AMP + H(+). It carries out the reaction [pyruvate, water dikinase]-phosphate + phosphate + H(+) = [pyruvate, water dikinase] + diphosphate. Bifunctional serine/threonine kinase and phosphorylase involved in the regulation of the phosphoenolpyruvate synthase (PEPS) by catalyzing its phosphorylation/dephosphorylation. This is Putative phosphoenolpyruvate synthase regulatory protein from Vibrio vulnificus (strain CMCP6).